A 238-amino-acid polypeptide reads, in one-letter code: 2,3,4,5-tetrahydropyridine-2,6-dicarboxylate N-acetyltransferase (238 aa).

This sequence belongs to the transferase hexapeptide repeat family. DapH subfamily.

The catalysed reaction is (S)-2,3,4,5-tetrahydrodipicolinate + acetyl-CoA + H2O = L-2-acetamido-6-oxoheptanedioate + CoA. Its pathway is amino-acid biosynthesis; L-lysine biosynthesis via DAP pathway; LL-2,6-diaminopimelate from (S)-tetrahydrodipicolinate (acetylase route): step 1/3. In terms of biological role, catalyzes the transfer of an acetyl group from acetyl-CoA to tetrahydrodipicolinate. The polypeptide is 2,3,4,5-tetrahydropyridine-2,6-dicarboxylate N-acetyltransferase (Pseudothermotoga lettingae (strain ATCC BAA-301 / DSM 14385 / NBRC 107922 / TMO) (Thermotoga lettingae)).